We begin with the raw amino-acid sequence, 316 residues long: NAC domain-containing protein 22 (316 aa).

The 154-residue stretch at 17-170 folds into the NAC domain; it reads DLPGFRFHPT…DMVLCKIYRK (154 aa). A DNA-binding region spans residues 117–176; the sequence is IGLKKTLVFYQGRAPRGTKTDWVMNEYRLPDYGAARAAAPPPKEDMVLCKIYRKATPLKE. The interval 229 to 260 is disordered; it reads QSSSSSAAPSGSSSKNGGAGAPREAKKEEADV. Residues 230–244 show a composition bias toward low complexity; sequence SSSSSAAPSGSSSKN.

It is found in the nucleus. Its function is as follows. Transcription activator that binds sequence-specific DNA motifs. Involved in stress response. Plays a positive role in drought and salt stress tolerance through the modulation of abscisic acid-mediated signaling. This Oryza sativa subsp. japonica (Rice) protein is NAC domain-containing protein 22.